Here is a 141-residue protein sequence, read N- to C-terminus: Sec-independent protein translocase protein TatB (141 aa).

Residues 1–21 (MFGISFSELLLVGLVALLVLG) traverse the membrane as a helical segment. Residues 74-141 (EAQKLLAPLT…SPPSETPRNP (68 aa)) form a disordered region. The span at 89 to 115 (QETPPPAAESPAPSVPTPPPTSTPAVP) shows a compositional bias: pro residues. Low complexity predominate over residues 116–129 (PADAAAPPAVAAST). Positions 130 to 141 (PPSPPSETPRNP) are enriched in pro residues.

The protein belongs to the TatB family. As to quaternary structure, the Tat system comprises two distinct complexes: a TatABC complex, containing multiple copies of TatA, TatB and TatC subunits, and a separate TatA complex, containing only TatA subunits. Substrates initially bind to the TatABC complex, which probably triggers association of the separate TatA complex to form the active translocon.

It localises to the cell inner membrane. In terms of biological role, part of the twin-arginine translocation (Tat) system that transports large folded proteins containing a characteristic twin-arginine motif in their signal peptide across membranes. Together with TatC, TatB is part of a receptor directly interacting with Tat signal peptides. TatB may form an oligomeric binding site that transiently accommodates folded Tat precursor proteins before their translocation. In Pseudomonas aeruginosa (strain ATCC 15692 / DSM 22644 / CIP 104116 / JCM 14847 / LMG 12228 / 1C / PRS 101 / PAO1), this protein is Sec-independent protein translocase protein TatB.